Reading from the N-terminus, the 208-residue chain is Recombination protein RecR (208 aa).

The C4-type zinc-finger motif lies at 60–75 (CKVCHNICDDEVCSIC). The region spanning 83 to 178 (SLVCVVENIK…RISVIARGVS (96 aa)) is the Toprim domain.

This sequence belongs to the RecR family.

In terms of biological role, may play a role in DNA repair. It seems to be involved in an RecBC-independent recombinational process of DNA repair. It may act with RecF and RecO. In Parabacteroides distasonis (strain ATCC 8503 / DSM 20701 / CIP 104284 / JCM 5825 / NCTC 11152), this protein is Recombination protein RecR.